A 279-amino-acid polypeptide reads, in one-letter code: MQGPHAQMTDAAYEIRRSEIAALSTDLAPEDPIPVVEYTEWEHEVWRTVCVDLTARHRTDAAAEYLESAEQLAVPLDHVPQLRDVSGRLGSISGFTFQSAPALVPLREFCGGLANSVFHSTQYLRHPRSPFYTEDPDLLHDLVGHGNVLASDRFARLYRLAGNAAARVHSTEALQFIGKVFWFTLECGVVRERGERKAYGATLVSSYGELDHFRSADFRPLDIKSLADVEYDISTYQPILFEADSMDEVEDTVGSFWDTCDDDSIAALLGGTSRSVTPH.

Fe cation contacts are provided by His140, His145, and Glu186.

Belongs to the biopterin-dependent aromatic amino acid hydroxylase family. Fe(2+) is required as a cofactor.

The catalysed reaction is (6R)-L-erythro-5,6,7,8-tetrahydrobiopterin + L-phenylalanine + O2 = 3-hydroxy-L-phenylalanine + (4aS,6R)-4a-hydroxy-L-erythro-5,6,7,8-tetrahydrobiopterin. In terms of biological role, in vitro, catalyzes the highly regiospecific C-3 hydroxylation of L-phenylalanine (L-Phe) to yield 3-hydroxy-L-phenylalanine (meta-Tyr), an amino acid found in bacterial secondary metabolites such as sanglifehrin A and some pacidamycins. Tetrahydrobiopterin (BH4) seems to be the physiological pterin, however the hydroxylase is also able to use 6-methyltetrahydropterin (6-MePH4). The chain is Phenylalanine 3-hydroxylase from Streptomyces coeruleorubidus.